An 89-amino-acid polypeptide reads, in one-letter code: Elongation factor 1-beta (89 aa).

The protein belongs to the EF-1-beta/EF-1-delta family.

In terms of biological role, promotes the exchange of GDP for GTP in EF-1-alpha/GDP, thus allowing the regeneration of EF-1-alpha/GTP that could then be used to form the ternary complex EF-1-alpha/GTP/AAtRNA. The polypeptide is Elongation factor 1-beta (Methanococcus aeolicus (strain ATCC BAA-1280 / DSM 17508 / OCM 812 / Nankai-3)).